Here is a 320-residue protein sequence, read N- to C-terminus: Zinc transporter ZitB (320 aa).

Helical transmembrane passes span 16 to 36, 43 to 63, 85 to 105, 117 to 137, 153 to 173, and 180 to 200; these read LLAAFIITATFMVAEVIGGLL, LADAGHMLTDAAALFVALVAV, AAFVNALTLILITAFIFWEAI, VPMLLVAIAGLLANIVAFWLL, LHVLGDLLGSVGAIAAAIIIL, and IDPILSILVSCLVLRSAWALL.

This sequence belongs to the cation diffusion facilitator (CDF) transporter (TC 2.A.4) family. SLC30A subfamily.

The protein localises to the cell inner membrane. Functionally, involved in zinc efflux across the cytoplasmic membrane, thus reducing zinc accumulation in the cytoplasm and rendering bacteria more resistant to zinc. It may contribute to zinc homeostasis at low concentrations of zinc. This is Zinc transporter ZitB from Pectobacterium atrosepticum (strain SCRI 1043 / ATCC BAA-672) (Erwinia carotovora subsp. atroseptica).